The following is a 620-amino-acid chain: 1-deoxy-D-xylulose-5-phosphate synthase (620 aa).

Thiamine diphosphate-binding positions include histidine 80 and 121–123 (GHS). Aspartate 152 lines the Mg(2+) pocket. Thiamine diphosphate contacts are provided by residues 153-154 (GA), asparagine 181, tyrosine 288, and glutamate 370. Asparagine 181 lines the Mg(2+) pocket.

This sequence belongs to the transketolase family. DXPS subfamily. Homodimer. The cofactor is Mg(2+). Thiamine diphosphate serves as cofactor.

It catalyses the reaction D-glyceraldehyde 3-phosphate + pyruvate + H(+) = 1-deoxy-D-xylulose 5-phosphate + CO2. It participates in metabolic intermediate biosynthesis; 1-deoxy-D-xylulose 5-phosphate biosynthesis; 1-deoxy-D-xylulose 5-phosphate from D-glyceraldehyde 3-phosphate and pyruvate: step 1/1. In terms of biological role, catalyzes the acyloin condensation reaction between C atoms 2 and 3 of pyruvate and glyceraldehyde 3-phosphate to yield 1-deoxy-D-xylulose-5-phosphate (DXP). The polypeptide is 1-deoxy-D-xylulose-5-phosphate synthase (Salmonella arizonae (strain ATCC BAA-731 / CDC346-86 / RSK2980)).